We begin with the raw amino-acid sequence, 372 residues long: 4-hydroxy-3-methylbut-2-en-1-yl diphosphate synthase (flavodoxin) (372 aa).

4 residues coordinate [4Fe-4S] cluster: Cys270, Cys273, Cys305, and Glu312.

Belongs to the IspG family. It depends on [4Fe-4S] cluster as a cofactor.

The catalysed reaction is (2E)-4-hydroxy-3-methylbut-2-enyl diphosphate + oxidized [flavodoxin] + H2O + 2 H(+) = 2-C-methyl-D-erythritol 2,4-cyclic diphosphate + reduced [flavodoxin]. Its pathway is isoprenoid biosynthesis; isopentenyl diphosphate biosynthesis via DXP pathway; isopentenyl diphosphate from 1-deoxy-D-xylulose 5-phosphate: step 5/6. Converts 2C-methyl-D-erythritol 2,4-cyclodiphosphate (ME-2,4cPP) into 1-hydroxy-2-methyl-2-(E)-butenyl 4-diphosphate. The chain is 4-hydroxy-3-methylbut-2-en-1-yl diphosphate synthase (flavodoxin) from Enterobacter sp. (strain 638).